We begin with the raw amino-acid sequence, 59 residues long: Large ribosomal subunit protein bL32 (59 aa).

Residues 1–15 (MAVPKRKTSKSKRDM) are compositionally biased toward basic residues. The disordered stretch occupies residues 1–21 (MAVPKRKTSKSKRDMRRASNS).

Belongs to the bacterial ribosomal protein bL32 family.

This Alkaliphilus metalliredigens (strain QYMF) protein is Large ribosomal subunit protein bL32.